A 348-amino-acid polypeptide reads, in one-letter code: Protein RecA (348 aa).

67 to 74 (GPESSGKT) is an ATP binding site.

This sequence belongs to the RecA family.

It is found in the cytoplasm. Its function is as follows. Can catalyze the hydrolysis of ATP in the presence of single-stranded DNA, the ATP-dependent uptake of single-stranded DNA by duplex DNA, and the ATP-dependent hybridization of homologous single-stranded DNAs. It interacts with LexA causing its activation and leading to its autocatalytic cleavage. This chain is Protein RecA, found in Clostridioides difficile (strain 630) (Peptoclostridium difficile).